Here is a 130-residue protein sequence, read N- to C-terminus: Small ribosomal subunit protein uS9 (130 aa).

It belongs to the universal ribosomal protein uS9 family.

The protein is Small ribosomal subunit protein uS9 of Burkholderia ambifaria (strain MC40-6).